A 270-amino-acid chain; its full sequence is Shikimate dehydrogenase (NADP(+)) (270 aa).

Shikimate contacts are provided by residues 15–17 (SKS) and Thr-62. Lys-66 (proton acceptor) is an active-site residue. Asp-78 is a binding site for NADP(+). Positions 87 and 103 each coordinate shikimate. NADP(+) is bound by residues 128-132 (GAGGA), 152-157 (NRTVDR), and Leu-213. Tyr-215 provides a ligand contact to shikimate. NADP(+) is bound at residue Gly-237.

Belongs to the shikimate dehydrogenase family. Homodimer.

The enzyme catalyses shikimate + NADP(+) = 3-dehydroshikimate + NADPH + H(+). Its pathway is metabolic intermediate biosynthesis; chorismate biosynthesis; chorismate from D-erythrose 4-phosphate and phosphoenolpyruvate: step 4/7. Its function is as follows. Involved in the biosynthesis of the chorismate, which leads to the biosynthesis of aromatic amino acids. Catalyzes the reversible NADPH linked reduction of 3-dehydroshikimate (DHSA) to yield shikimate (SA). The protein is Shikimate dehydrogenase (NADP(+)) of Halorhodospira halophila (strain DSM 244 / SL1) (Ectothiorhodospira halophila (strain DSM 244 / SL1)).